Reading from the N-terminus, the 61-residue chain is Small ribosomal subunit protein uS14 (61 aa).

Positions 24, 27, 40, and 43 each coordinate Zn(2+).

This sequence belongs to the universal ribosomal protein uS14 family. Zinc-binding uS14 subfamily. Part of the 30S ribosomal subunit. Contacts proteins S3 and S10. Zn(2+) is required as a cofactor.

Binds 16S rRNA, required for the assembly of 30S particles and may also be responsible for determining the conformation of the 16S rRNA at the A site. In Thermotoga neapolitana (strain ATCC 49049 / DSM 4359 / NBRC 107923 / NS-E), this protein is Small ribosomal subunit protein uS14.